An 848-amino-acid chain; its full sequence is Protein SEY1 (848 aa).

The Cytoplasmic portion of the chain corresponds to 1–733 (MNGNFAAVGS…KRGALGGMTQ (733 aa)). In terms of domain architecture, GB1/RHD3-type G spans 47-277 (GFNYHLISVF…FVGGVFLPEY (231 aa)). 57–64 (GSQSTGKS) serves as a coordination point for GTP. The chain crosses the membrane as a helical span at residues 734 to 754 (VPLYFWIALFAFGWNEIWMVI). Residues 755–757 (RNP) are Lumenal-facing. A helical membrane pass occupies residues 758 to 778 (FLFILLLLSAGGTYVAYNLSL). At 779–848 (LGPMMQMTNA…KKKDYDDDGI (70 aa)) the chain is on the cytoplasmic side. Positions 815–848 (LAMPASSKSSGGEQVRMDTLDSKGKKKDYDDDGI) are disordered. Basic and acidic residues predominate over residues 829 to 848 (VRMDTLDSKGKKKDYDDDGI).

The protein belongs to the TRAFAC class dynamin-like GTPase superfamily. GB1/RHD3 GTPase family. RHD3 subfamily.

The protein localises to the endoplasmic reticulum membrane. Its function is as follows. Cooperates with the reticulon proteins and tubule-shaping DP1 family proteins to generate and maintain the structure of the tubular endoplasmic reticulum network. Has GTPase activity, which is required for its function in ER organization. The polypeptide is Protein SEY1 (Pyricularia oryzae (strain 70-15 / ATCC MYA-4617 / FGSC 8958) (Rice blast fungus)).